Here is a 2110-residue protein sequence, read N- to C-terminus: Protein Ycf2 (2110 aa).

The interval 190–209 is disordered; the sequence is DSSQLKGSSDQSRDPLDSIS. An ATP-binding site is contributed by 1442 to 1449; sequence GSIGTGRS.

The protein belongs to the Ycf2 family.

The protein resides in the plastid. It is found in the chloroplast stroma. Its function is as follows. Probable ATPase of unknown function. Its presence in a non-photosynthetic plant (Epifagus virginiana) and experiments in tobacco indicate that it has an essential function which is probably not related to photosynthesis. The protein is Protein Ycf2 of Panax ginseng (Korean ginseng).